Consider the following 100-residue polypeptide: Envelope glycoprotein N (100 aa).

The signal sequence occupies residues 1 to 27 (MLSTRFVTLAILACLLVVLGLARGAGG). Residues 28 to 63 (DPGVKQRIDVAREEERRDFWHAACSGHGFPITTPST) lie on the Virion surface side of the membrane. The helical transmembrane segment at 64-84 (AAILFYVSLLAVGVAVACQAY) threads the bilayer. Residues 85 to 100 (RAVLRIVTLEMLQHLH) are Intravirion-facing.

The protein belongs to the herpesviridae glycoprotein N family. As to quaternary structure, interacts (via N-terminus) with gM (via N-terminus). The gM-gN heterodimer forms the gCII complex.

It is found in the virion membrane. It localises to the host membrane. Its subcellular location is the host Golgi apparatus. The protein localises to the host trans-Golgi network. Envelope glycoprotein necessary for proper maturation of gM and modulation of its membrane fusion activity. Also plays a critical role in virion morphogenesis. The polypeptide is Envelope glycoprotein N (Equus caballus (Horse)).